A 69-amino-acid chain; its full sequence is DNA-directed RNA polymerase subunit omega (69 aa).

The protein belongs to the RNA polymerase subunit omega family. The RNAP catalytic core consists of 2 alpha, 1 beta, 1 beta' and 1 omega subunit. When a sigma factor is associated with the core the holoenzyme is formed, which can initiate transcription.

It carries out the reaction RNA(n) + a ribonucleoside 5'-triphosphate = RNA(n+1) + diphosphate. Its function is as follows. Promotes RNA polymerase assembly. Latches the N- and C-terminal regions of the beta' subunit thereby facilitating its interaction with the beta and alpha subunits. In Geobacter metallireducens (strain ATCC 53774 / DSM 7210 / GS-15), this protein is DNA-directed RNA polymerase subunit omega.